A 662-amino-acid polypeptide reads, in one-letter code: Chaperone protein dnaK1 (662 aa).

At Thr-198 the chain carries Phosphothreonine; by autocatalysis. Residues Asp-630–Arg-662 are disordered. The segment covering Asn-649 to Arg-662 has biased composition (basic and acidic residues).

Belongs to the heat shock protein 70 family.

In terms of biological role, acts as a chaperone. The protein is Chaperone protein dnaK1 (dnaK1) of Parasynechococcus marenigrum (strain WH8102).